A 397-amino-acid polypeptide reads, in one-letter code: P-selectin glycoprotein ligand 1 (397 aa).

A signal peptide spans 1-17; the sequence is MSPSFLVLLTILGPGNS. Residues 18–41 constitute a propeptide that is removed on maturation; that stretch reads LQLQDPWGHETKEAPGPVHLRERR. Residues 18 to 307 are Extracellular-facing; sequence LQLQDPWGHE…SSDLIPVKQC (290 aa). Y54 bears the Sulfotyrosine mark. T58 is a glycosylation site (O-linked (GalNAc...) threonine). The N-linked (GlcNAc...) asparagine glycan is linked to N66. A disordered region spans residues 89-261; it reads TSAGTSERAT…TMETASTESN (173 aa). Positions 120 to 198 are enriched in polar residues; that stretch reads STDSATQWSL…PMEAETSQPA (79 aa). 10 consecutive repeat copies span residues 126–135, 136–145, 146–155, 156–165, 166–175, 176–185, 186–195, 196–205, 206–215, and 216–225. Positions 126-225 are 10 X 10 AA tandem repeats; sequence QWSLTSVETV…KPAPTEAETT (100 aa). The span at 236–261 shows a compositional bias: polar residues; it reads LFTTSAATEVPSTEPTTMETASTESN. N261 carries N-linked (GlcNAc...) asparagine glycosylation. A helical membrane pass occupies residues 308–328; sequence LLIILILASLATIFLVCTVVL. Residues 329–397 lie on the Cytoplasmic side of the membrane; the sequence is AVRLSRKTHM…DDLTLHSFLP (69 aa). The tract at residues 364–390 is disordered; it reads PVTANGGLPKVQDLKTEPSGDRDGDDL. Over residues 375-390 the composition is skewed to basic and acidic residues; that stretch reads QDLKTEPSGDRDGDDL. T391 is subject to Phosphothreonine. The residue at position 394 (S394) is a Phosphoserine.

As to quaternary structure, homodimer; disulfide-linked. Interacts with P- and E-selectins, through their lectin/EGF domains. Interaction with P-selectin requires sialyl Lewis X glycan modification and tyrosine sulfation, probably on Tyr-54, for high affinity binding. Dimerization appears not to be required for P-selectin/SELP binding. Interacts with SNX20. Interacts with MSN and SYK; mediates SYK activation downstream of SELPLG. Interacts with HAVCR1. In terms of processing, displays complex, core-2, sialylated and fucosylated O-linked oligosaccharides, at least some of which appear to contain poly-N-acetyllactosamine with varying degrees of substitution. Mainly disialylated or neutral forms of the core-2 tetrasaccharide, Galbeta1--&gt;4GlcNAcbeta1--&gt;6(Galbeta1--&gt;3)GalNAcOH. The GlcN:GalN ratio is approximately 2:1 and the Man:Fuc ratio 3:5. Contains about 14% fucose with alpha-1,3 linkage present in two forms: One species is a disialylated, monofucosylated glycan, and the other, a monosialylated, trifucosylated glycan with a polylactosamine backbone. The fucosylated forms carry the Lewis antigen and are important for interaction with selectins and for functioning. No sulfated O-glycans. Some N-glycosylation. As to expression, highly expressed in blood, bone marrow, brain, adipose tissue, spleen, and thymus. Also expressed in heart, kidney, liver, muscle, ovary, and stomach.

It localises to the cell membrane. Functionally, a SLe(x)-type proteoglycan, which through high affinity, calcium-dependent interactions with E- and P-selectins, mediates rapid rolling of leukocytes over vascular surfaces during the initial steps in inflammation. Critical for the initial leukocyte capture. This is P-selectin glycoprotein ligand 1 (Selplg) from Mus musculus (Mouse).